An 867-amino-acid polypeptide reads, in one-letter code: Bifunctional cis-abienol synthase, chloroplastic (867 aa).

A chloroplast-targeting transit peptide spans 1–49 (MALPVYSLKSHIPITTIASAKMNYTPNKGMITANGRSRRIRLSPNKIVA). Position 270 (Lys270) interacts with substrate. The DXDD motif signature appears at 403–406 (DIDD). Lys490 is a binding site for substrate. Positions 622, 626, 763, 764, 767, and 771 each coordinate Mg(2+). Residues 622 to 626 (DDLYD) carry the DDXXD motif motif.

It belongs to the terpene synthase family. Tpsd subfamily. It depends on Mg(2+) as a cofactor.

It localises to the plastid. The protein resides in the chloroplast. The catalysed reaction is 8-hydroxycopalyl diphosphate = cis-abienol + diphosphate. It catalyses the reaction (2E,6E,10E)-geranylgeranyl diphosphate + H2O = 8-hydroxycopalyl diphosphate. It functions in the pathway terpene metabolism; oleoresin biosynthesis. Functionally, involved in the biosynthesis of cis-abienol, a labdane diterpene that can be used as synthesis precursor of ambergris substitution fragance products. Bifunctional class I/II enzyme in which both the bicyclization and water capture occur in the class II active site, resulting in an intermediary labda-13-en-8-ol diphosphate, which undergoes cleavage of the diphosphate group and final deprotonation at the class I active site. No activity with copalyl diphosphate as substrate. The polypeptide is Bifunctional cis-abienol synthase, chloroplastic (CAS) (Abies balsamea (Balsam fir)).